Reading from the N-terminus, the 326-residue chain is Nicotianamine synthase 2 (326 aa).

This sequence belongs to the nicotianamine synthase (NAS)-like family. Expressed in roots.

It catalyses the reaction 3 S-adenosyl-L-methionine = nicotianamine + 3 S-methyl-5'-thioadenosine + 3 H(+). In terms of biological role, synthesizes nicotianamine, a polyamine that is the first intermediate in the synthesis of the phytosiderophores of the mugineic acid type found in gramineae which serve as a sensor for the physiological iron status within the plant, and/or might be involved in the transport of iron. This is Nicotianamine synthase 2 (NAS2) from Oryza sativa subsp. indica (Rice).